Consider the following 285-residue polypeptide: Ribosomal protein L11 methyltransferase (285 aa).

Residues Thr-131, Gly-154, Asp-176, and Asn-223 each contribute to the S-adenosyl-L-methionine site.

The protein belongs to the methyltransferase superfamily. PrmA family.

Its subcellular location is the cytoplasm. The enzyme catalyses L-lysyl-[protein] + 3 S-adenosyl-L-methionine = N(6),N(6),N(6)-trimethyl-L-lysyl-[protein] + 3 S-adenosyl-L-homocysteine + 3 H(+). Methylates ribosomal protein L11. The polypeptide is Ribosomal protein L11 methyltransferase (Brucella abortus (strain S19)).